A 309-amino-acid chain; its full sequence is MQSDDIIWDVINKNFCSFKTTFNKTKFCKNEYNVTGVCNKVSCPLANSRYATVREEEGVCYLYMKTVERAHTPNRLWEKIKLDPNFMKAIEQIDSHLEFWPGHMSHRVKQRYIRITQYLIRMRKMRKQIKRELVPIKKKAERRDATRENKALIAAHLTTNIKKELLERLNKGTYADMHYFPEDIINNVLEKEGEADQFSEEEADENEEEGEEEMEEEFEDDIDDIEDAGGAFEYVEGDDDEDDIDDEYENEPYQDDDEEDDDDDDDDDEEVKPQITKKRGPTFKPTKKTPQKRVHMEVEIEEETENQAN.

The tract at residues 194–309 (EADQFSEEEA…IEEETENQAN (116 aa)) is disordered. 2 stretches are compositionally biased toward acidic residues: residues 195–227 (ADQF…DIED) and 235–270 (VEGD…DDEE). Residues 275-293 (ITKKRGPTFKPTKKTPQKR) show a composition bias toward basic residues. Over residues 299 to 309 (EIEEETENQAN) the composition is skewed to acidic residues.

Belongs to the MAK16 family.

Its subcellular location is the nucleus. The protein localises to the nucleolus. The chain is Protein MAK16 homolog (mak16l) from Dictyostelium discoideum (Social amoeba).